The chain runs to 296 residues: MQTKEKLASLSYLAVKSLLYELNLTPKPGLVDCHNNGAHNDMDFYTFLDSILSLSPFFKKYIEVGWLYHNESPQYLFNQLRKLGIEAEAAMFSATERVNTHKGINFSFALLLGATGSYLAKHIELIQEKRRFMPQDSLTICHLAGEMSMHLIQNDLSHVETKRNLTYGEKLFLQYGLKGLRGEASQGYPSLTQKALPFFRNELLKKQDIQISQLKLLLYLMTFIEDSNIIHRGGIKSWKKVQQEAQTLLEKDLPPYQLKEQLNSYNQILTDRHLSPGGAADLLSLTLYFSFLEQLI.

The protein belongs to the CitG/MdcB family.

The catalysed reaction is 3'-dephospho-CoA + ATP = 2'-(5''-triphospho-alpha-D-ribosyl)-3'-dephospho-CoA + adenine. This chain is Probable 2-(5''-triphosphoribosyl)-3'-dephosphocoenzyme-A synthase, found in Streptococcus mutans serotype c (strain ATCC 700610 / UA159).